A 437-amino-acid polypeptide reads, in one-letter code: Transmembrane protease serine 4 (437 aa).

Residues 1–32 lie on the Cytoplasmic side of the membrane; that stretch reads MLQDPDSDQPLNSLDVKPLRKPRIPMETFRKV. The chain crosses the membrane as a helical; Signal-anchor for type II membrane protein span at residues 33–53; the sequence is GIPIIIALLSLASIIIVVVLI. The Extracellular segment spans residues 54 to 437; the sequence is KVILDKYYFL…WIYNVWKAEL (384 aa). An LDL-receptor class A domain is found at 61–93; the sequence is YFLCGQPLHFIPRKQLCDGELDCPLGEDEEHCV. Intrachain disulfides connect Cys64–Cys83, Cys77–Cys92, Cys127–Cys183, Cys140–Cys193, Cys196–Cys310, Cys230–Cys246, Cys356–Cys372, and Cys383–Cys410. The SRCR domain occupies 94–204; it reads KSFPEGPAVA…ACGKSLKTPR (111 aa). N-linked (GlcNAc...) asparagine glycosylation is found at Asn130 and Asn178. The Peptidase S1 domain maps to 205 to 434; that stretch reads VVGVEEASVD…YLNWIYNVWK (230 aa). Catalysis depends on charge relay system residues His245 and Asp290. Catalysis depends on Ser387, which acts as the Charge relay system.

The protein belongs to the peptidase S1 family. In terms of processing, proteolytically processed; probably by an autocatalytic mechanism. As to expression, high levels in pancreatic, gastric, colorectal and ampullary cancer. Very weak expression in normal gastrointestinal and urogenital tract. Coexpressed with ACE2 within mature enterocytes.

It is found in the cell membrane. It localises to the secreted. In terms of biological role, plasma membrane-anchored serine protease that directly induces processing of pro-uPA/PLAU into the active form through proteolytic activity. Seems to be capable of activating ENaC. (Microbial infection) In gut epithelial cells, facilitates human coronavirus SARS-CoV-2 infection through, at least, the cleavage of coronavirus spike glycoproteins which activates the glycoprotein for host cell entry. This is Transmembrane protease serine 4 from Homo sapiens (Human).